Here is a 321-residue protein sequence, read N- to C-terminus: Ubiquitin carboxyl-terminal hydrolase ubh-4 (321 aa).

The UCH catalytic domain occupies 6–220 (SWCLIESDPG…ITFNLMALVP (215 aa)). Cys-83 serves as the catalytic Nucleophile. His-158 serves as the catalytic Proton donor. The 29-residue stretch at 273–301 (NYTPFVIELMKILAKEGKLVGLVDNAYQA) folds into the ULD domain.

The protein belongs to the peptidase C12 family. Interacts with proteasome 19S subunit rpn-13. As to expression, highly expressed in intestine and to a lesser extent in other tissues including muscles and neurons.

The enzyme catalyses Thiol-dependent hydrolysis of ester, thioester, amide, peptide and isopeptide bonds formed by the C-terminal Gly of ubiquitin (a 76-residue protein attached to proteins as an intracellular targeting signal).. Its function is as follows. Ubiquitin-protein hydrolase involved both in the processing of ubiquitin precursors and of ubiquitinated proteins. This enzyme is a thiol protease that recognizes and hydrolyzes a peptide bond at the C-terminal glycine of ubiquitin. This is Ubiquitin carboxyl-terminal hydrolase ubh-4 from Caenorhabditis elegans.